A 92-amino-acid polypeptide reads, in one-letter code: Acylphosphatase (92 aa).

One can recognise an Acylphosphatase-like domain in the interval 3-90 (RVHVLVAGRV…GEFTEFAVLR (88 aa)). Residues Arg-18 and Asn-36 contribute to the active site.

The protein belongs to the acylphosphatase family.

It catalyses the reaction an acyl phosphate + H2O = a carboxylate + phosphate + H(+). The chain is Acylphosphatase (acyP) from Methylococcus capsulatus (strain ATCC 33009 / NCIMB 11132 / Bath).